A 172-amino-acid polypeptide reads, in one-letter code: Small ribosomal subunit protein uS5 (172 aa).

An S5 DRBM domain is found at 17–80; sequence LREKMISVNR…EQARRNMFKV (64 aa).

The protein belongs to the universal ribosomal protein uS5 family. As to quaternary structure, part of the 30S ribosomal subunit. Contacts proteins S4 and S8.

Functionally, with S4 and S12 plays an important role in translational accuracy. In terms of biological role, located at the back of the 30S subunit body where it stabilizes the conformation of the head with respect to the body. In Paraburkholderia phytofirmans (strain DSM 17436 / LMG 22146 / PsJN) (Burkholderia phytofirmans), this protein is Small ribosomal subunit protein uS5.